The primary structure comprises 214 residues: S-crystallin 1 (214 aa).

Positions 2–79 (PSYTLHYFNH…YLAREFGFHG (78 aa)) constitute a GST N-terminal domain. The region spanning 81–214 (NNMEMARVDF…YLQRRCRTDF (134 aa)) is the GST C-terminal domain.

This sequence belongs to the GST superfamily. In terms of tissue distribution, lens.

In terms of biological role, S-crystallins are structural components of squids and octopi eye lens. Contains relatively little GST activity (1/1000 of that of mammalian GST enzyme). In Octopus vulgaris (Common octopus), this protein is S-crystallin 1 (OCTS1).